The following is a 2419-amino-acid chain: Telomere-associated protein RIF1 (2419 aa).

Disordered stretches follow at residues 1-24 and 373-408; these read MTAPGRSPLEPLLETWEDPSVPPG and SIPSPQGNSSRGSASPGLSPLTPGHKGASPYGSPRG. Polar residues predominate over residues 373–385; sequence SIPSPQGNSSRGS. Residues Ser-385, Ser-391, Ser-779, Ser-976, and Ser-1005 each carry the phosphoserine modification. Phosphothreonine is present on Thr-1044. A compositionally biased stretch (low complexity) spans 1184-1198; it reads SSSTETSVVSSSSVS. 2 disordered regions span residues 1184 to 1594 and 1613 to 1637; these read SSST…QAVP and RVILQDSAGPADSLQAPPKGEEKSK. Composition is skewed to polar residues over residues 1199-1217 and 1228-1255; these read NATFSGTPPQPTSRRQTFI and RPFSPSPLNNISSTVTVRNNQDNTTNTD. Residue Thr-1215 is modified to Phosphothreonine. 2 positions are modified to phosphoserine: Ser-1231 and Ser-1233. Basic and acidic residues predominate over residues 1263–1272; sequence REVTNSKSDS. Positions 1289–1302 are enriched in polar residues; that stretch reads AEQSVTKKSKPSLT. Residues 1323–1345 are compositionally biased toward basic and acidic residues; that stretch reads HVSENDDHPSEATLEHKDGDPKP. 4 positions are modified to phosphoserine: Ser-1407, Ser-1439, Ser-1457, and Ser-1498. The segment covering 1416–1455 has biased composition (basic and acidic residues); the sequence is SQERESGQQKKERRKEEEKIISKSPLRIKDDKLPTQKLTD. Residues 1457–1467 show a composition bias toward polar residues; sequence SPIQENLTEKG. Thr-1504 is subject to Phosphothreonine. Residues 1507–1516 are compositionally biased toward basic and acidic residues; the sequence is NLDKSSEKPL. Polar residues predominate over residues 1525–1537; it reads RRASQGLISAVEN. Phosphoserine is present on residues Ser-1528, Ser-1538, Ser-1540, Ser-1542, and Ser-1550. The span at 1551 to 1560 shows a compositional bias: basic residues; it reads RKKRSGKWKN. Residues Ser-1562 and Ser-1565 each carry the phosphoserine modification. Over residues 1572–1581 the composition is skewed to basic and acidic residues; sequence EEKKAEEEVM. Ser-1680 and Ser-1683 each carry phosphoserine. The residue at position 1780 (Thr-1780) is a Phosphothreonine. The residue at position 1784 (Ser-1784) is a Phosphoserine. Positions 1812-1836 are disordered; the sequence is ASEAVSEIQGPCSENHSPAEDPGLS. Ser-1842 is subject to Phosphoserine. Positions 1882–2419 are interaction with condensed chromosomes in telophase; the sequence is DAFVAADSEK…RWRSPAHENS (538 aa). 2 disordered regions span residues 1890–1914 and 1929–1983; these read EKSTQMDVSVDVATEEDNKKDECEA and FNSG…AQMS. Residues Ser-1931, Ser-2094, Ser-2109, Ser-2121, Ser-2125, Ser-2144, Ser-2153, Ser-2208, Ser-2287, Ser-2341, Ser-2413, and Ser-2419 each carry the phosphoserine modification. An interaction with ERCC6 region spans residues 2119 to 2394; that stretch reads VWSPLASPST…TGSQLFEMHE (276 aa). Positions 2182 to 2212 are disordered; that stretch reads SPIIKSVKTSPTSHSKHNTTSAKGFLSPGSQ. Over residues 2189–2212 the composition is skewed to polar residues; it reads KTSPTSHSKHNTTSAKGFLSPGSQ.

This sequence belongs to the RIF1 family. As to quaternary structure, interacts with TP53BP1 (when phosphorylated by ATM). May interact with TRF2. Interacts with SHLD2. Interacts with ERCC6 (via WHD region). Interacts with ASTE1. Expressed in Sertoli cells, prospermatagonia, early primary spermatocytes, and in oocytes at all stages of their growth. Expressed in embryonic stem (ES) and embryonic germ (EG) cells: expression is lost upon differentiation.

It is found in the nucleus. Its subcellular location is the chromosome. The protein resides in the telomere. The protein localises to the cytoplasm. It localises to the cytoskeleton. It is found in the spindle. Functionally, key regulator of TP53BP1 that plays a key role in the repair of double-strand DNA breaks (DSBs) in response to DNA damage: acts by promoting non-homologous end joining (NHEJ)-mediated repair of DSBs. In response to DNA damage, interacts with ATM-phosphorylated TP53BP1. Interaction with TP53BP1 leads to dissociate the interaction between NUDT16L1/TIRR and TP53BP1, thereby unmasking the tandem Tudor-like domain of TP53BP1 and allowing recruitment to DNA DSBs. Once recruited to DSBs, RIF1 and TP53BP1 act by promoting NHEJ-mediated repair of DSBs. In the same time, RIF1 and TP53BP1 specifically counteract the function of BRCA1 by blocking DSBs resection via homologous recombination (HR) during G1 phase. Also required for immunoglobulin class-switch recombination (CSR) during antibody genesis, a process that involves the generation of DNA DSBs. Promotes NHEJ of dysfunctional telomeres. The polypeptide is Telomere-associated protein RIF1 (Mus musculus (Mouse)).